We begin with the raw amino-acid sequence, 331 residues long: MKISQAVGNACTVPASSVETHNNNPSKESKIIYLPGTNCEIKSQALLSAFTSYRVGGAAELYVAPRNIEALQASLRYAQEHNLRVTTLGAGSNLLVSDRGISGLVIATRHLRYTHFDHQTGQVTIAAGESIPSLAWEIAKLGWQGFEWAVGIPGTVGGAVVMNAGAHNSCIADILVSAQVLSPDGTVETLTPEELGYAYRTSLLQGSNRVVTQATFQLQPGFDPAYVTATTKQHKQMRLTTQPYNFPSCGSVFRNPKPYSAGWLIEQSGLKGYQIGGAQVAHLHANFIVNRGGAKANDIFCLIRHIQQEVQERWSILLEPEVKMLGEFQAA.

The 168-residue stretch at 54–221 folds into the FAD-binding PCMH-type domain; that stretch reads RVGGAAELYV…TQATFQLQPG (168 aa). The active site involves Arg-200. Ser-251 (proton donor) is an active-site residue. Glu-321 is an active-site residue.

The protein belongs to the MurB family. It depends on FAD as a cofactor.

Its subcellular location is the cytoplasm. It carries out the reaction UDP-N-acetyl-alpha-D-muramate + NADP(+) = UDP-N-acetyl-3-O-(1-carboxyvinyl)-alpha-D-glucosamine + NADPH + H(+). The protein operates within cell wall biogenesis; peptidoglycan biosynthesis. In terms of biological role, cell wall formation. The chain is UDP-N-acetylenolpyruvoylglucosamine reductase from Nostoc sp. (strain PCC 7120 / SAG 25.82 / UTEX 2576).